A 412-amino-acid polypeptide reads, in one-letter code: D-nopaline dehydrogenase (412 aa).

The protein belongs to the lysopine/nopaline/octopine/opine/vitopine dehydrogenases family. In terms of assembly, homotetramer.

The catalysed reaction is D-nopaline + NADP(+) + H2O = L-arginine + 2-oxoglutarate + NADPH + H(+). The protein is D-nopaline dehydrogenase (nos) of Agrobacterium vitis (Rhizobium vitis).